A 217-amino-acid chain; its full sequence is Zinc finger CCHC-type and RNA-binding motif-containing protein 1 (217 aa).

The region spanning 10–88 (STVYVSNLPF…RVIKASIAID (79 aa)) is the RRM domain. A CCHC-type zinc finger spans residues 105–122 (SKCYECGESGHLSYACPK). Residues 120-217 (CPKNMLGERE…YFSDEEELSD (98 aa)) form a disordered region. Acidic residues predominate over residues 145 to 163 (PEEEIEEVEVSEEEGEDPA). Phosphoserine occurs at positions 155, 210, and 216.

As to quaternary structure, component of the U11/U12 snRNPs that are part of the U12-type spliceosome. Interacts with ZRSR1.

It is found in the nucleus. The protein localises to the nucleoplasm. In Rattus norvegicus (Rat), this protein is Zinc finger CCHC-type and RNA-binding motif-containing protein 1 (Zcrb1).